A 119-amino-acid chain; its full sequence is MIQKNTLLEVADNSGARAVLCIGLLGGRKSASVGDTIIISTKSINPKGKVEKGKVYKAVVVRVKNSVKKSDGSVIRFSSNAVVLINDQGEPLGTRVFGPVKKLLSGSFMKIMSLADEVL.

Belongs to the universal ribosomal protein uL14 family. Part of the 50S ribosomal subunit. Forms a cluster with proteins L3 and L19. In the 70S ribosome, L14 and L19 interact and together make contacts with the 16S rRNA in bridges B5 and B8.

In terms of biological role, binds to 23S rRNA. Forms part of two intersubunit bridges in the 70S ribosome. The chain is Large ribosomal subunit protein uL14 from Wolbachia pipientis subsp. Culex pipiens (strain wPip).